Reading from the N-terminus, the 306-residue chain is Tryptophan 2,3-dioxygenase (306 aa).

The tract at residues 1 to 33 (MQPPGDDAAPRCPFAGAHAPDAPHVPEAAGDDA) is disordered. Substrate contacts are provided by residues 75-79 (FIIQH), Tyr-137, and Arg-141. Residue His-264 participates in heme binding. Thr-278 provides a ligand contact to substrate.

The protein belongs to the tryptophan 2,3-dioxygenase family. As to quaternary structure, homotetramer. Heme serves as cofactor.

It catalyses the reaction L-tryptophan + O2 = N-formyl-L-kynurenine. It participates in amino-acid degradation; L-tryptophan degradation via kynurenine pathway; L-kynurenine from L-tryptophan: step 1/2. Heme-dependent dioxygenase that catalyzes the oxidative cleavage of the L-tryptophan (L-Trp) pyrrole ring and converts L-tryptophan to N-formyl-L-kynurenine. Catalyzes the oxidative cleavage of the indole moiety. The chain is Tryptophan 2,3-dioxygenase from Burkholderia pseudomallei (strain 668).